The sequence spans 201 residues: Holliday junction resolvase RecU (201 aa).

Positions 1–26 are disordered; that stretch reads MAIGYPNGKKYAASQEELPQQKRKAP. Positions 87, 89, 102, and 121 each coordinate Mg(2+).

It belongs to the RecU family. It depends on Mg(2+) as a cofactor.

The protein resides in the cytoplasm. It carries out the reaction Endonucleolytic cleavage at a junction such as a reciprocal single-stranded crossover between two homologous DNA duplexes (Holliday junction).. Its function is as follows. Endonuclease that resolves Holliday junction intermediates in genetic recombination. Cleaves mobile four-strand junctions by introducing symmetrical nicks in paired strands. Promotes annealing of linear ssDNA with homologous dsDNA. Required for DNA repair, homologous recombination and chromosome segregation. The sequence is that of Holliday junction resolvase RecU from Listeria monocytogenes serotype 4a (strain HCC23).